Consider the following 105-residue polypeptide: Small ribosomal subunit protein uS10 (105 aa).

This sequence belongs to the universal ribosomal protein uS10 family. Part of the 30S ribosomal subunit.

Its function is as follows. Involved in the binding of tRNA to the ribosomes. The protein is Small ribosomal subunit protein uS10 of Anaplasma phagocytophilum (strain HZ).